A 398-amino-acid chain; its full sequence is G2/mitotic-specific cyclin-B2 (398 aa).

Residue T8 is modified to Phosphothreonine. A phosphoserine mark is found at S11, S77, and S92. Phosphothreonine is present on T94. 3 positions are modified to phosphoserine: S99, S392, and S398.

It belongs to the cyclin family. Cyclin AB subfamily. Interacts with the CDK1 protein kinase to form a serine/threonine kinase holoenzyme complex also known as maturation promoting factor (MPF). The cyclin subunit imparts substrate specificity to the complex.

Essential for the control of the cell cycle at the G2/M (mitosis) transition. The protein is G2/mitotic-specific cyclin-B2 (CCNB2) of Homo sapiens (Human).